Consider the following 266-residue polypeptide: Glucosamine-6-phosphate deaminase (266 aa).

The Proton acceptor; for enolization step role is filled by Asp-72. The active-site For ring-opening step is Asp-141. Residue His-143 is the Proton acceptor; for ring-opening step of the active site. Glu-148 (for ring-opening step) is an active-site residue.

The protein belongs to the glucosamine/galactosamine-6-phosphate isomerase family. NagB subfamily. As to quaternary structure, homohexamer.

The enzyme catalyses alpha-D-glucosamine 6-phosphate + H2O = beta-D-fructose 6-phosphate + NH4(+). It participates in amino-sugar metabolism; N-acetylneuraminate degradation; D-fructose 6-phosphate from N-acetylneuraminate: step 5/5. Its activity is regulated as follows. Allosterically activated by N-acetylglucosamine 6-phosphate (GlcNAc6P). Catalyzes the reversible isomerization-deamination of glucosamine 6-phosphate (GlcN6P) to form fructose 6-phosphate (Fru6P) and ammonium ion. This chain is Glucosamine-6-phosphate deaminase, found in Salmonella typhi.